The primary structure comprises 105 residues: MATYQVEVIYQGQSQTFTADSDQSVLDSAQAAGVDLPASCLTGVCTTCAARILSGEVDQPDAMGVGPEPAKQGYTLLCVAYPRSDLKIETHKEDELYALQFGQPG.

A 2Fe-2S ferredoxin-type domain is found at 4–94 (YQVEVIYQGQ…DLKIETHKED (91 aa)). Residues C40, C45, C48, and C78 each contribute to the [2Fe-2S] cluster site.

The protein belongs to the 2Fe2S plant-type ferredoxin family. Forms a complex with heterodimeric ferredoxin-thioredoxin reductase (FTR) and thioredoxin. [2Fe-2S] cluster serves as cofactor.

In terms of biological role, ferredoxins are iron-sulfur proteins that transfer electrons in a wide variety of metabolic reactions. This is Ferredoxin-2 (petF2) from Synechococcus sp. (strain ATCC 27144 / PCC 6301 / SAUG 1402/1) (Anacystis nidulans).